The chain runs to 505 residues: Elsinochrome transporter 1 (505 aa).

The span at 1 to 10 (MALSGLGSGP) shows a compositional bias: gly residues. Positions 1–25 (MALSGLGSGPEGNPNNHQGKAIPTL) are disordered. The chain crosses the membrane as a helical span at residues 35–55 (FLFSWVSFLVPFWSWYPFSPL). Residues N64 and N80 are each glycosylated (N-linked (GlcNAc...) asparagine). The disordered stretch occupies residues 221-295 (DTPTGAGKPP…TEKGESLPLT (75 aa)). Positions 255-267 (TPSSPDRSSSTNS) are enriched in low complexity. 6 consecutive transmembrane segments (helical) span residues 313–333 (VIFSGPTLVLGACYFCTFGAE), 348–368 (LGLGLQNAGNLAAIFGLLNIV), 391–411 (KALLHTYCVMTGVFCIAIGLA), 417–437 (ATLVGLVSGGLAFFLEGANGL), 449–469 (VVSGFTGACGNLGGIVFAIVF), and 479–499 (VFWIIGAIIIGLQVATCWIKP).

The protein belongs to the major facilitator superfamily. Nitrate/nitrite porter (TC 2.A.1.8) family.

It is found in the cell membrane. Functionally, major facilitator-type transporter; part of the gene cluster that mediates the biosynthesis of elsinochromes, pigments consisting of at least four interconvertible tautomers (A, B, C and D) that have a core phenolic quinone to which various side chains are attached and which play an important role in fungal pathogenesis. Once elsinochrome is synthesized, it must be exported outside the fungal cells, which is probably accomplished by the ECT1 transporter, to avoid toxicity. This Elsinoe fawcettii (Citrus scab fungus) protein is Elsinochrome transporter 1.